Consider the following 247-residue polypeptide: MMEYATHLSRQGYAFIPGDYYRSTEAMQFSNKEDFLDELEELKKGYENLLLDPYSPGNRWRGYAQCKKNEKGELTFGKFNPYKQTKAFNPDTGDIIRDYPLLPEAITRNRLFQTLLHDDLSLVDAYESIGPVDSLTIGIHFFRYQATENEPAYSSPVWLHKDDEDVVFVHMINASPNMLGGDSLIASHPRSIDRVLRLEQLFDTLVVNHDKLHAVTPVGARENSGPAQRDIILITFQKNEEKTACPV.

Fe cation-binding residues include histidine 160, aspartate 162, and histidine 213.

The protein belongs to the iron/ascorbate-dependent oxidoreductase family. The cofactor is L-ascorbate. It depends on Fe(2+) as a cofactor.

The catalysed reaction is 3(1)-hydroxy-L-isoleucine + 2-oxoglutarate + O2 = (4S)-3(1),4-dihydroxy-L-isoleucine + succinate + CO2. Its function is as follows. Catalyzes the hydroxylation of L-4'-hydroxyisoleucine (4'-HIL) at the C-4 position to form L-4,4'-dihydroxyisoleucine (4,4'-DIHIL). Together with HilA, catalyzes the two step conversion of L-isoleucine into L-4,4'-dihydroxyisoleucine. In vitro, in the absence of HilA, can also catalyze the oxidation of L-methionine and the C-4-hydroxylation of L-leucine and L-isoleucine. In Pantoea ananatis (strain AJ13355), this protein is 3(1)-hydroxy-L-isoleucine 4-dioxygenase.